A 320-amino-acid chain; its full sequence is 33 kDa chaperonin (320 aa).

The span at 1–17 shows a compositional bias: basic and acidic residues; that stretch reads MTDASGSERLKRTKDIS. The interval 1–27 is disordered; it reads MTDASGSERLKRTKDISESTPPSSLPD. 2 cysteine pairs are disulfide-bonded: Cys262–Cys264 and Cys295–Cys298.

It belongs to the HSP33 family. Post-translationally, under oxidizing conditions two disulfide bonds are formed involving the reactive cysteines. Under reducing conditions zinc is bound to the reactive cysteines and the protein is inactive.

It is found in the cytoplasm. Redox regulated molecular chaperone. Protects both thermally unfolding and oxidatively damaged proteins from irreversible aggregation. Plays an important role in the bacterial defense system toward oxidative stress. The chain is 33 kDa chaperonin from Synechococcus sp. (strain JA-3-3Ab) (Cyanobacteria bacterium Yellowstone A-Prime).